We begin with the raw amino-acid sequence, 462 residues long: NEDD8-activating enzyme E1 catalytic subunit (462 aa).

The segment at 52–69 (HPDFEASTESLQFLLDTC) is interaction with ube2m N-terminus. Residues 99–123 (DMDT…GRPK) and 147–170 (IQDL…SVIA) each bind ATP. Interaction with ube2m N-terminus stretches follow at residues 156-160 (RQFHI) and 191-216 (PSSI…LPGM). The tract at residues 226–228 (LYP) is interaction with nedd8. C236 acts as the Glycyl thioester intermediate in catalysis. Interaction with nae1 regions lie at residues 241–247 (MPRLPEH) and 291–294 (FNIT). The interval 330–337 (IATSAYVP) is interaction with ube2m N-terminus. The interaction with nedd8 stretch occupies residues 351–356 (YTYTFE). The tract at residues 367 to 462 (SQVPQDMQFT…TVLFKLKFIS (96 aa)) is interaction with ube2m core domain.

This sequence belongs to the ubiquitin-activating E1 family. UBA3 subfamily. In terms of assembly, heterodimer of uba3 and nae1. Interacts with nedd8, ube2f and ube2m.

The enzyme catalyses ATP + [NEDD8 protein] + [E1 NEDD8-activating enzyme]-L-cysteine = AMP + diphosphate + [E1 NEDD8-activating enzyme]-S-[NEDD8 protein]-yl-L-cysteine.. It functions in the pathway protein modification; protein neddylation. Its function is as follows. Catalytic subunit of the dimeric uba3-nae1 E1 enzyme. E1 activates nedd8 by first adenylating its C-terminal glycine residue with ATP, thereafter linking this residue to the side chain of the catalytic cysteine, yielding a nedd8-uba3 thioester and free AMP. E1 finally transfers nedd8 to the catalytic cysteine of ube2m. The polypeptide is NEDD8-activating enzyme E1 catalytic subunit (uba3) (Danio rerio (Zebrafish)).